A 331-amino-acid chain; its full sequence is Mycothiol acetyltransferase (331 aa).

Glu-33 serves as a coordination point for 1D-myo-inositol 2-(L-cysteinylamino)-2-deoxy-alpha-D-glucopyranoside. Over residues 59–86 (HAAEATAGSAASADPADPADPAAPADPA) the composition is skewed to low complexity. The disordered stretch occupies residues 59–89 (HAAEATAGSAASADPADPADPAAPADPADPA). 115-120 (RRGHGS) serves as a coordination point for acetyl-CoA. The N-acetyltransferase domain maps to 183–331 (LRLDTFEESR…DVQLRATERG (149 aa)). 1D-myo-inositol 2-(L-cysteinylamino)-2-deoxy-alpha-D-glucopyranoside is bound by residues Glu-210, Lys-249, and Glu-261. 265 to 267 (VAT) lines the acetyl-CoA pocket. A 1D-myo-inositol 2-(L-cysteinylamino)-2-deoxy-alpha-D-glucopyranoside-binding site is contributed by Tyr-299. Acetyl-CoA is bound at residue 304–309 (NAPALR).

The protein belongs to the acetyltransferase family. MshD subfamily. Monomer.

The enzyme catalyses 1D-myo-inositol 2-(L-cysteinylamino)-2-deoxy-alpha-D-glucopyranoside + acetyl-CoA = mycothiol + CoA + H(+). Its function is as follows. Catalyzes the transfer of acetyl from acetyl-CoA to desacetylmycothiol (Cys-GlcN-Ins) to form mycothiol. This is Mycothiol acetyltransferase from Brachybacterium faecium (strain ATCC 43885 / DSM 4810 / JCM 11609 / LMG 19847 / NBRC 14762 / NCIMB 9860 / 6-10).